Consider the following 238-residue polypeptide: 3-deoxy-manno-octulosonate cytidylyltransferase (238 aa).

The protein belongs to the KdsB family.

The protein resides in the cytoplasm. It carries out the reaction 3-deoxy-alpha-D-manno-oct-2-ulosonate + CTP = CMP-3-deoxy-beta-D-manno-octulosonate + diphosphate. Its pathway is nucleotide-sugar biosynthesis; CMP-3-deoxy-D-manno-octulosonate biosynthesis; CMP-3-deoxy-D-manno-octulosonate from 3-deoxy-D-manno-octulosonate and CTP: step 1/1. It participates in bacterial outer membrane biogenesis; lipopolysaccharide biosynthesis. Its function is as follows. Activates KDO (a required 8-carbon sugar) for incorporation into bacterial lipopolysaccharide in Gram-negative bacteria. This Nitratiruptor sp. (strain SB155-2) protein is 3-deoxy-manno-octulosonate cytidylyltransferase.